We begin with the raw amino-acid sequence, 713 residues long: Calpain-1 catalytic subunit (713 aa).

A Calpain catalytic domain is found at 55 to 354 (LFQDEAFPPV…FTKLEICNLT (300 aa)). Residues glutamine 109 and aspartate 114 each contribute to the Ca(2+) site. Active-site residues include cysteine 115, histidine 272, and asparagine 296. 2 residues coordinate Ca(2+): aspartate 318 and glutamate 323. Residue threonine 354 is modified to Phosphothreonine. The domain III stretch occupies residues 355–525 (PDALKSRTLR…KKAGTQELDD (171 aa)). The linker stretch occupies residues 526-541 (QIQANLPDEKVLSEEE). EF-hand domains are found at residues 540 to 575 (EEID…IISK), 584 to 617 (FSLE…NRIR), 614 to 649 (NRIR…AGFK), and 679 to 713 (VRLE…TMFA). Positions 542–712 (IDDNFKTLFS…LFKWLQLTMF (171 aa)) are domain IV. The Ca(2+) site is built by aspartate 597, aspartate 599, asparagine 601, lysine 603, glutamate 608, aspartate 627, aspartate 629, serine 631, serine 633, and glutamate 638.

Belongs to the peptidase C2 family. Forms a heterodimer with a small (regulatory) subunit CAPNS1. Ca(2+) serves as cofactor. Post-translationally, undergoes calcium-induced successive autoproteolytic cleavages that generate a membrane-bound 78 kDa active form and an intracellular 75 kDa active form. Calpastatin reduces with high efficiency the transition from 78 kDa to 75 kDa calpain forms.

The protein resides in the cytoplasm. It localises to the cell membrane. It catalyses the reaction Broad endopeptidase specificity.. With respect to regulation, activated by micromolar concentrations of calcium and inhibited by calpastatin. Functionally, calcium-regulated non-lysosomal thiol-protease which catalyzes limited proteolysis of substrates involved in cytoskeletal remodeling and signal transduction. Proteolytically cleaves CTBP1 at 'Asn-375', 'Gly-388' and 'His-410'. Cleaves and activates caspase-7 (CASP7). In Mus musculus (Mouse), this protein is Calpain-1 catalytic subunit.